The primary structure comprises 449 residues: Na(+)/H(+) antiporter NhaA 1 (449 aa).

11 helical membrane passes run 38-58 (GILL…PWAA), 79-99 (FTIR…VVGM), 117-137 (VLPL…YAAF), 145-165 (AGWA…LTLV), 175-195 (VFLT…IALF), 198-218 (SGLH…LACL), 240-260 (MHHG…FMPA), 311-331 (FVHL…ALAN), 347-367 (PLPL…IFLF), 390-410 (GVAV…GLAF), and 422-442 (LGIL…LRFV).

The protein belongs to the NhaA Na(+)/H(+) (TC 2.A.33) antiporter family.

It localises to the cell inner membrane. The enzyme catalyses Na(+)(in) + 2 H(+)(out) = Na(+)(out) + 2 H(+)(in). In terms of biological role, na(+)/H(+) antiporter that extrudes sodium in exchange for external protons. This is Na(+)/H(+) antiporter NhaA 1 from Myxococcus xanthus (strain DK1622).